The following is a 126-amino-acid chain: Fluoride-specific ion channel FluC 3 (126 aa).

Helical transmembrane passes span 7-27 (MWVG…GLSI), 37-57 (LGTF…SILF), 68-87 (LMNT…FSSM), and 101-121 (AIAA…AAFG). Glycine 79 and threonine 82 together coordinate Na(+).

The protein belongs to the fluoride channel Fluc/FEX (TC 1.A.43) family.

Its subcellular location is the cell inner membrane. It catalyses the reaction fluoride(in) = fluoride(out). Its activity is regulated as follows. Na(+) is not transported, but it plays an essential structural role and its presence is essential for fluoride channel function. In terms of biological role, fluoride-specific ion channel. Important for reducing fluoride concentration in the cell, thus reducing its toxicity. This Yersinia pestis protein is Fluoride-specific ion channel FluC 3.